Reading from the N-terminus, the 317-residue chain is tRNA dimethylallyltransferase (317 aa).

Position 14–21 (14–21) interacts with ATP; the sequence is GPTAVGKT. Residue 16–21 participates in substrate binding; the sequence is TAVGKT. The interval 39–42 is interaction with substrate tRNA; it reads DSMQ.

The protein belongs to the IPP transferase family. As to quaternary structure, monomer. It depends on Mg(2+) as a cofactor.

The enzyme catalyses adenosine(37) in tRNA + dimethylallyl diphosphate = N(6)-dimethylallyladenosine(37) in tRNA + diphosphate. Its function is as follows. Catalyzes the transfer of a dimethylallyl group onto the adenine at position 37 in tRNAs that read codons beginning with uridine, leading to the formation of N6-(dimethylallyl)adenosine (i(6)A). The sequence is that of tRNA dimethylallyltransferase from Bacillus cereus (strain B4264).